A 358-amino-acid chain; its full sequence is D-alanine--D-alanine ligase B (358 aa).

An ATP-grasp domain is found at 147–352; that stretch reads KYVLENFKFK…YSALIDELIE (206 aa). An ATP-binding site is contributed by 179 to 234; sequence VEKLQYDVFIKPANSGSSVGITKAHNKEELLKGLEEAFIHDKNVLVEEAINAREIE. Mg(2+)-binding residues include D305, E319, and N321.

It belongs to the D-alanine--D-alanine ligase family. Requires Mg(2+) as cofactor. The cofactor is Mn(2+).

The protein resides in the cytoplasm. It carries out the reaction 2 D-alanine + ATP = D-alanyl-D-alanine + ADP + phosphate + H(+). It participates in cell wall biogenesis; peptidoglycan biosynthesis. Functionally, cell wall formation. This chain is D-alanine--D-alanine ligase B, found in Clostridium tetani (strain Massachusetts / E88).